The following is a 544-amino-acid chain: Chaperonin GroEL 1 (544 aa).

ATP contacts are provided by residues Thr29 to Pro32, Asp86 to Thr90, Gly413, and Asp495.

The protein belongs to the chaperonin (HSP60) family. Forms a cylinder of 14 subunits composed of two heptameric rings stacked back-to-back. Interacts with the co-chaperonin GroES.

It is found in the cytoplasm. The enzyme catalyses ATP + H2O + a folded polypeptide = ADP + phosphate + an unfolded polypeptide.. Together with its co-chaperonin GroES, plays an essential role in assisting protein folding. The GroEL-GroES system forms a nano-cage that allows encapsulation of the non-native substrate proteins and provides a physical environment optimized to promote and accelerate protein folding. The protein is Chaperonin GroEL 1 of Synechococcus sp. (strain ATCC 27144 / PCC 6301 / SAUG 1402/1) (Anacystis nidulans).